The primary structure comprises 198 residues: dTTP/UTP pyrophosphatase (198 aa).

The Proton acceptor role is filled by Asp-69.

This sequence belongs to the Maf family. YhdE subfamily. A divalent metal cation serves as cofactor.

The protein resides in the cytoplasm. It catalyses the reaction dTTP + H2O = dTMP + diphosphate + H(+). The enzyme catalyses UTP + H2O = UMP + diphosphate + H(+). In terms of biological role, nucleoside triphosphate pyrophosphatase that hydrolyzes dTTP and UTP. May have a dual role in cell division arrest and in preventing the incorporation of modified nucleotides into cellular nucleic acids. This is dTTP/UTP pyrophosphatase from Idiomarina loihiensis (strain ATCC BAA-735 / DSM 15497 / L2-TR).